The following is a 344-amino-acid chain: Dihydroorotate dehydrogenase (quinone) (344 aa).

Residues 65–69 and T89 contribute to the FMN site; that span reads AGLDK. K69 is a binding site for substrate. 114–118 is a substrate binding site; it reads NRMGF. The FMN site is built by N142 and N175. N175 lines the substrate pocket. S178 (nucleophile) is an active-site residue. Residue N180 coordinates substrate. 2 residues coordinate FMN: K220 and T248. 249 to 250 serves as a coordination point for substrate; that stretch reads NT. FMN contacts are provided by residues G271, G300, and 321-322; that span reads YT.

The protein belongs to the dihydroorotate dehydrogenase family. Type 2 subfamily. As to quaternary structure, monomer. FMN serves as cofactor.

It localises to the cell membrane. The catalysed reaction is (S)-dihydroorotate + a quinone = orotate + a quinol. It functions in the pathway pyrimidine metabolism; UMP biosynthesis via de novo pathway; orotate from (S)-dihydroorotate (quinone route): step 1/1. In terms of biological role, catalyzes the conversion of dihydroorotate to orotate with quinone as electron acceptor. The sequence is that of Dihydroorotate dehydrogenase (quinone) from Paraburkholderia phymatum (strain DSM 17167 / CIP 108236 / LMG 21445 / STM815) (Burkholderia phymatum).